A 64-amino-acid chain; its full sequence is UPF0434 protein Bcen_1934 (64 aa).

Belongs to the UPF0434 family.

The protein is UPF0434 protein Bcen_1934 of Burkholderia orbicola (strain AU 1054).